The chain runs to 905 residues: DNA-directed RNA polymerase subunit Rpo1N (905 aa).

Residues cysteine 60, cysteine 63, cysteine 70, histidine 73, cysteine 100, cysteine 103, cysteine 147, and cysteine 150 each contribute to the Zn(2+) site. Residues aspartate 461, aspartate 463, and aspartate 465 each coordinate Mg(2+).

The protein belongs to the RNA polymerase beta' chain family. Part of the RNA polymerase complex. Mg(2+) is required as a cofactor. Requires Zn(2+) as cofactor.

It localises to the cytoplasm. The enzyme catalyses RNA(n) + a ribonucleoside 5'-triphosphate = RNA(n+1) + diphosphate. Functionally, DNA-dependent RNA polymerase (RNAP) catalyzes the transcription of DNA into RNA using the four ribonucleoside triphosphates as substrates. Forms the clamp head domain. This chain is DNA-directed RNA polymerase subunit Rpo1N, found in Thermococcus celer.